A 233-amino-acid polypeptide reads, in one-letter code: Pilin-like protein PilA3 (233 aa).

A propeptide spans 1-4 (MKRG) (leader sequence). Phenylalanine 5 carries the post-translational modification N-methylphenylalanine. The chain crosses the membrane as a helical span at residues 5–25 (FTLVEVLVAMAILVVVLAVGV). Residues 121-143 (LRRSDVNATPSSGSDCTTPPPNS) are disordered. The segment covering 126–137 (VNATPSSGSDCT) has biased composition (polar residues).

The protein resides in the cell inner membrane. It localises to the cell outer membrane. Its subcellular location is the periplasm. Functionally, plays an essential role in natural DNA transformation but is not required for pilus biogenesis. This Thermus thermophilus (strain ATCC BAA-163 / DSM 7039 / HB27) protein is Pilin-like protein PilA3 (pilA3).